Reading from the N-terminus, the 138-residue chain is Enhancer of split malpha protein (138 aa).

Belongs to the M4-like protein family.

In terms of biological role, part of the Notch signaling pathway. The protein is Enhancer of split malpha protein of Drosophila melanogaster (Fruit fly).